The chain runs to 377 residues: N-acetyldiaminopimelate deacetylase (377 aa).

Asp-69 is a catalytic residue. Glu-128 serves as the catalytic Proton acceptor.

This sequence belongs to the peptidase M20A family. N-acetyldiaminopimelate deacetylase subfamily.

It carries out the reaction N-acetyl-(2S,6S)-2,6-diaminopimelate + H2O = (2S,6S)-2,6-diaminopimelate + acetate. Its pathway is amino-acid biosynthesis; L-lysine biosynthesis via DAP pathway; LL-2,6-diaminopimelate from (S)-tetrahydrodipicolinate (acetylase route): step 3/3. Functionally, catalyzes the conversion of N-acetyl-diaminopimelate to diaminopimelate and acetate. The sequence is that of N-acetyldiaminopimelate deacetylase from Streptococcus sanguinis (strain SK36).